Reading from the N-terminus, the 451-residue chain is UDP-N-acetylmuramoylalanine--D-glutamate ligase (451 aa).

116 to 122 (GTNGKTT) lines the ATP pocket.

Belongs to the MurCDEF family.

It localises to the cytoplasm. The enzyme catalyses UDP-N-acetyl-alpha-D-muramoyl-L-alanine + D-glutamate + ATP = UDP-N-acetyl-alpha-D-muramoyl-L-alanyl-D-glutamate + ADP + phosphate + H(+). It participates in cell wall biogenesis; peptidoglycan biosynthesis. Cell wall formation. Catalyzes the addition of glutamate to the nucleotide precursor UDP-N-acetylmuramoyl-L-alanine (UMA). This Clostridioides difficile (strain 630) (Peptoclostridium difficile) protein is UDP-N-acetylmuramoylalanine--D-glutamate ligase.